A 140-amino-acid polypeptide reads, in one-letter code: 3-hydroxyacyl-[acyl-carrier-protein] dehydratase FabZ (140 aa).

His47 is an active-site residue.

This sequence belongs to the thioester dehydratase family. FabZ subfamily.

It localises to the cytoplasm. The enzyme catalyses a (3R)-hydroxyacyl-[ACP] = a (2E)-enoyl-[ACP] + H2O. Involved in unsaturated fatty acids biosynthesis. Catalyzes the dehydration of short chain beta-hydroxyacyl-ACPs and long chain saturated and unsaturated beta-hydroxyacyl-ACPs. The sequence is that of 3-hydroxyacyl-[acyl-carrier-protein] dehydratase FabZ from Streptococcus pyogenes serotype M49 (strain NZ131).